Here is a 360-residue protein sequence, read N- to C-terminus: MKPSIVAKLEALQERYEEIQALLAEADVIASQERFRALSKEYAQLTDITSCYRQWRKVQDDMEAAEMMLDDPEMKEMAQEELKEAQSVNEELEQQLQVLLLPKDPDDEFNCFLEIRAGTGGDEAALFAGDLFRMYSRYAEARRWRIEVMNANEGEHGGYKEIIAKVIGDGAYGVLKFESGGHRVQRVPETESQGRIHTSACTVAVLPEVPEAELPEISPSDLRIDTFRSSGAGGQHVNTTDSAIRITHIPTGIVVECQDERSQHKNKAKAMSVLGARIRAAEVQKRQEAEASERRNLLGSGDRSDRIRTYNFPQGRVTDHRINLTLYRLDEVMEGKLDALIQPIVTEYQADQLSALSEQD.

N5-methylglutamine is present on Q235. The segment at 285 to 305 (KRQEAEASERRNLLGSGDRSD) is disordered.

It belongs to the prokaryotic/mitochondrial release factor family. Methylated by PrmC. Methylation increases the termination efficiency of RF1.

The protein resides in the cytoplasm. Its function is as follows. Peptide chain release factor 1 directs the termination of translation in response to the peptide chain termination codons UAG and UAA. The chain is Peptide chain release factor 1 from Proteus mirabilis (strain HI4320).